Reading from the N-terminus, the 141-residue chain is Large ribosomal subunit protein uL16 (141 aa).

It belongs to the universal ribosomal protein uL16 family. As to quaternary structure, part of the 50S ribosomal subunit.

In terms of biological role, binds 23S rRNA and is also seen to make contacts with the A and possibly P site tRNAs. The chain is Large ribosomal subunit protein uL16 from Rhodospirillum centenum (strain ATCC 51521 / SW).